Reading from the N-terminus, the 562-residue chain is MSLPGLELSQQPIEARRAPPQPTQISLPKGSEWRFEVAFGNTTRVKLLAGTAELFGTELATSQTYTFSGTKAAIYTWHGCTLEVGAGDPVPIGPVGSAPVPPGPGNGGCQVEYIAEETPMAEYANVHFALETMRHDAKAAGRDGPRVLILGPEDAGKTSLAKILTGYATKMGRQPLVVNLDPSEGMLSVPGALTATAFRSMIDVEEGWGSSPMSGPSPIPVKLPLVYFYGLPACLDGDGSYYKAIVSRLALAVTGRMAEDSDAREAGVIIDTPGIIGQGKGASEDVIHHIVTEFSISTILVIGSERLYSTMVKNYDNKPIATSATAAASDERISVVKLTKSGGCVDRDATFMKYVRESQIRSYFFGSPVPSTASSALSLSSTTTGTTMTLSPHTSQVDFNSLSIYSITIATEGEEDEYDPSKFDSFLPGGHEENDHNTSLTGTTSLQPPSGLLPGLRSELPSATTGFPSASTSSTTPFTNLPSPAPMSLANTLLAITNAAPNASLDEVRDASIMGFIYIADVDEKKGQGGKLRLLAPVGGRVPNRAMIWGRKWPGEVVGLIG.

The interval 1 to 27 (MSLPGLELSQQPIEARRAPPQPTQISL) is disordered. Residues glutamate 32, lysine 71, and 154–159 (DAGKTS) contribute to the ATP site. A disordered region spans residues 415–483 (EDEYDPSKFD…STTPFTNLPS (69 aa)). A compositionally biased stretch (low complexity) spans 445–479 (SLQPPSGLLPGLRSELPSATTGFPSASTSSTTPFT).

The protein belongs to the Clp1 family. Clp1 subfamily. As to quaternary structure, component of a pre-mRNA cleavage factor complex. Interacts directly with PCF11.

The protein resides in the nucleus. Required for endonucleolytic cleavage during polyadenylation-dependent pre-mRNA 3'-end formation. In Coccidioides immitis (strain RS) (Valley fever fungus), this protein is mRNA cleavage and polyadenylation factor CLP1.